The following is a 312-amino-acid chain: Acetylglutamate kinase (312 aa).

Residues 76–77 (GG), Arg-98, and Asn-199 each bind substrate.

The protein belongs to the acetylglutamate kinase family. ArgB subfamily.

The protein localises to the cytoplasm. The catalysed reaction is N-acetyl-L-glutamate + ATP = N-acetyl-L-glutamyl 5-phosphate + ADP. The protein operates within amino-acid biosynthesis; L-arginine biosynthesis; N(2)-acetyl-L-ornithine from L-glutamate: step 2/4. Catalyzes the ATP-dependent phosphorylation of N-acetyl-L-glutamate. The chain is Acetylglutamate kinase from Beutenbergia cavernae (strain ATCC BAA-8 / DSM 12333 / CCUG 43141 / JCM 11478 / NBRC 16432 / NCIMB 13614 / HKI 0122).